Consider the following 184-residue polypeptide: Nucleoside triphosphate pyrophosphatase (184 aa).

D66 serves as the catalytic Proton acceptor.

It belongs to the Maf family. A divalent metal cation is required as a cofactor.

The protein localises to the cytoplasm. The enzyme catalyses a ribonucleoside 5'-triphosphate + H2O = a ribonucleoside 5'-phosphate + diphosphate + H(+). The catalysed reaction is a 2'-deoxyribonucleoside 5'-triphosphate + H2O = a 2'-deoxyribonucleoside 5'-phosphate + diphosphate + H(+). Its function is as follows. Nucleoside triphosphate pyrophosphatase. May have a dual role in cell division arrest and in preventing the incorporation of modified nucleotides into cellular nucleic acids. The protein is Nucleoside triphosphate pyrophosphatase of Prochlorococcus marinus (strain MIT 9313).